A 94-amino-acid chain; its full sequence is Large ribosomal subunit protein bL27 (94 aa).

A propeptide spanning residues 1–9 is cleaved from the precursor; the sequence is MLELNLQLF. Positions 12 to 33 are disordered; it reads KKGGGSTSNGRDSQAKRLGAKA.

The protein belongs to the bacterial ribosomal protein bL27 family. Post-translationally, the N-terminus is cleaved by ribosomal processing cysteine protease Prp.

This is Large ribosomal subunit protein bL27 from Lactococcus lactis subsp. lactis (strain IL1403) (Streptococcus lactis).